Reading from the N-terminus, the 427-residue chain is Gamma-glutamyl phosphate reductase (427 aa).

It belongs to the gamma-glutamyl phosphate reductase family.

It is found in the cytoplasm. The enzyme catalyses L-glutamate 5-semialdehyde + phosphate + NADP(+) = L-glutamyl 5-phosphate + NADPH + H(+). Its pathway is amino-acid biosynthesis; L-proline biosynthesis; L-glutamate 5-semialdehyde from L-glutamate: step 2/2. Catalyzes the NADPH-dependent reduction of L-glutamate 5-phosphate into L-glutamate 5-semialdehyde and phosphate. The product spontaneously undergoes cyclization to form 1-pyrroline-5-carboxylate. This Rhizobium etli (strain CIAT 652) protein is Gamma-glutamyl phosphate reductase.